Consider the following 349-residue polypeptide: RING-H2 finger protein ATL48 (349 aa).

The HIG1 domain maps to 1–85 (MSSVEPDMED…DNPWKKLLLS (85 aa)). N-acetylserine is present on Ser2. 3 helical membrane passes run 21-41 (PLVP…LISF), 55-75 (ARVV…YYYG), and 121-141 (CLVI…YLIF). The RING-type; atypical zinc-finger motif lies at 207–249 (CAVCLNEFSDTDKLRLLPVCSHAFHLHCIDTWLLSNSTCPLCR).

This sequence belongs to the RING-type zinc finger family. ATL subfamily.

The protein localises to the membrane. It carries out the reaction S-ubiquitinyl-[E2 ubiquitin-conjugating enzyme]-L-cysteine + [acceptor protein]-L-lysine = [E2 ubiquitin-conjugating enzyme]-L-cysteine + N(6)-ubiquitinyl-[acceptor protein]-L-lysine.. It functions in the pathway protein modification; protein ubiquitination. The polypeptide is RING-H2 finger protein ATL48 (ATL48) (Arabidopsis thaliana (Mouse-ear cress)).